A 252-amino-acid polypeptide reads, in one-letter code: Chitooligosaccharide deacetylase (252 aa).

Residues His61 and His125 each contribute to the Mg(2+) site.

It belongs to the YdjC deacetylase family. ChbG subfamily. As to quaternary structure, homodimer. Mg(2+) is required as a cofactor.

The protein localises to the cytoplasm. It catalyses the reaction N,N'-diacetylchitobiose + H2O = N-acetyl-beta-D-glucosaminyl-(1-&gt;4)-D-glucosamine + acetate. It carries out the reaction diacetylchitobiose-6'-phosphate + H2O = N'-monoacetylchitobiose-6'-phosphate + acetate. The protein operates within glycan degradation; chitin degradation. In terms of biological role, involved in the degradation of chitin. ChbG is essential for growth on the acetylated chitooligosaccharides chitobiose and chitotriose but is dispensable for growth on cellobiose and chitosan dimer, the deacetylated form of chitobiose. Deacetylation of chitobiose-6-P and chitotriose-6-P is necessary for both the activation of the chb promoter by the regulatory protein ChbR and the hydrolysis of phosphorylated beta-glucosides by the phospho-beta-glucosidase ChbF. Catalyzes the removal of only one acetyl group from chitobiose-6-P to yield monoacetylchitobiose-6-P, the inducer of ChbR and the substrate of ChbF. The sequence is that of Chitooligosaccharide deacetylase from Salmonella heidelberg (strain SL476).